We begin with the raw amino-acid sequence, 388 residues long: 3-dehydroquinate synthase (388 aa).

Residues 85–90, 119–123, 143–144, Lys-156, Lys-165, and 183–186 each bind NAD(+); these read DGEQYK, GVIGD, TT, and TLKT. Positions 198, 261, and 278 each coordinate Zn(2+).

It belongs to the sugar phosphate cyclases superfamily. Dehydroquinate synthase family. The cofactor is Co(2+). Requires Zn(2+) as cofactor. NAD(+) is required as a cofactor.

The protein localises to the cytoplasm. It catalyses the reaction 7-phospho-2-dehydro-3-deoxy-D-arabino-heptonate = 3-dehydroquinate + phosphate. It participates in metabolic intermediate biosynthesis; chorismate biosynthesis; chorismate from D-erythrose 4-phosphate and phosphoenolpyruvate: step 2/7. Catalyzes the conversion of 3-deoxy-D-arabino-heptulosonate 7-phosphate (DAHP) to dehydroquinate (DHQ). This is 3-dehydroquinate synthase from Psychrobacter arcticus (strain DSM 17307 / VKM B-2377 / 273-4).